Reading from the N-terminus, the 460-residue chain is Cysteine--tRNA ligase (460 aa).

Zn(2+) is bound at residue cysteine 28. The short motif at 30 to 40 is the 'HIGH' region element; the sequence is VTIYDLCHIGH. Zn(2+)-binding residues include cysteine 209, histidine 234, and glutamate 238. Residues 266 to 270 carry the 'KMSKS' region motif; that stretch reads KMSKS. Lysine 269 is a binding site for ATP.

It belongs to the class-I aminoacyl-tRNA synthetase family. In terms of assembly, monomer. It depends on Zn(2+) as a cofactor.

The protein resides in the cytoplasm. It catalyses the reaction tRNA(Cys) + L-cysteine + ATP = L-cysteinyl-tRNA(Cys) + AMP + diphosphate. This Vibrio parahaemolyticus serotype O3:K6 (strain RIMD 2210633) protein is Cysteine--tRNA ligase.